A 164-amino-acid chain; its full sequence is Deoxyuridine 5'-triphosphate nucleotidohydrolase (164 aa).

Residues 66-68 (RSG), asparagine 79, 83-85 (TVD), and lysine 93 each bind substrate.

It belongs to the dUTPase family. Mg(2+) is required as a cofactor.

The catalysed reaction is dUTP + H2O = dUMP + diphosphate + H(+). Its pathway is pyrimidine metabolism; dUMP biosynthesis; dUMP from dCTP (dUTP route): step 2/2. In terms of biological role, this enzyme is involved in nucleotide metabolism: it produces dUMP, the immediate precursor of thymidine nucleotides and it decreases the intracellular concentration of dUTP so that uracil cannot be incorporated into DNA. The chain is Deoxyuridine 5'-triphosphate nucleotidohydrolase from Rhodococcus erythropolis (strain PR4 / NBRC 100887).